Consider the following 247-residue polypeptide: Retbindin (247 aa).

Residues 1-31 form the signal peptide; the sequence is MAHEGHSQHSGLVWALRPILAWIFLVACGWS. Intrachain disulfides connect cysteine 99-cysteine 169, cysteine 106-cysteine 146, cysteine 139-cysteine 183, and cysteine 152-cysteine 165.

It belongs to the folate receptor family. In terms of processing, not N-glycosylated. Expressed in the peripheral retina where it localizes to the inter-photoreceptor matrix (at protein level). May be produced by rod photoreceptors (at protein level).

The protein resides in the secreted. It is found in the extracellular space. The protein localises to the extracellular matrix. Its subcellular location is the interphotoreceptor matrix. It localises to the cell membrane. Its function is as follows. Riboflavin-binding protein which might have a role in retinal flavin transport. This chain is Retbindin (Rtbdn), found in Mus musculus (Mouse).